Consider the following 283-residue polypeptide: Pantothenate synthetase (283 aa).

31-38 (MGALHDGH) lines the ATP pocket. Catalysis depends on His38, which acts as the Proton donor. Gln62 serves as a coordination point for (R)-pantoate. Gln62 is a beta-alanine binding site. An ATP-binding site is contributed by 148-151 (GKKD). Gln154 serves as a coordination point for (R)-pantoate. Residues Ile177 and 185–188 (KSSR) contribute to the ATP site.

The protein belongs to the pantothenate synthetase family. In terms of assembly, homodimer.

It is found in the cytoplasm. It carries out the reaction (R)-pantoate + beta-alanine + ATP = (R)-pantothenate + AMP + diphosphate + H(+). It functions in the pathway cofactor biosynthesis; (R)-pantothenate biosynthesis; (R)-pantothenate from (R)-pantoate and beta-alanine: step 1/1. In terms of biological role, catalyzes the condensation of pantoate with beta-alanine in an ATP-dependent reaction via a pantoyl-adenylate intermediate. In Oceanobacillus iheyensis (strain DSM 14371 / CIP 107618 / JCM 11309 / KCTC 3954 / HTE831), this protein is Pantothenate synthetase.